Consider the following 443-residue polypeptide: MPYTPHTPEEIRQMLDVIGVKSIDDLFAEIPPEMQPRSFDIPEGMSEMEVCARIQRMAAKNRIDLVSYLGAGFYDHHIPKAVDNLVSRGEFYTAYTPYQPEASQGTLQAIFEYQTAVCRLMEMEVANASVYDGGSAIFEAMMMAARATRRSKLVIDEALSPIYRTMLASYTSNLNMELVTVAHNEGRSDKQALMDAVDDKCAAVVVQNPNFFGAVDDFTELFTHARSCNALGVISVYPVMQSVLKTPGEMGADIAVADGQSLGMPLSFGGPYLGIMTCTKKLARQIPGRIAGRTKDVDGKTGYVLTLQAREQHIRRAKATSNICSNQALCALRAIIHMCLTGPEGLVRTAELSMERAHYAADRLTALPGVSLLHDAPFCNEFALRLPVSAYDVVDRLVNHGVVPGFPLGGYYAGMDDVLLVACTEKHSFEQIGIMAELVGGML.

Belongs to the GcvP family. N-terminal subunit subfamily. The glycine cleavage system is composed of four proteins: P, T, L and H. In this organism, the P 'protein' is a heterodimer of two subunits.

The catalysed reaction is N(6)-[(R)-lipoyl]-L-lysyl-[glycine-cleavage complex H protein] + glycine + H(+) = N(6)-[(R)-S(8)-aminomethyldihydrolipoyl]-L-lysyl-[glycine-cleavage complex H protein] + CO2. Its function is as follows. The glycine cleavage system catalyzes the degradation of glycine. The P protein binds the alpha-amino group of glycine through its pyridoxal phosphate cofactor; CO(2) is released and the remaining methylamine moiety is then transferred to the lipoamide cofactor of the H protein. The sequence is that of Probable glycine dehydrogenase (decarboxylating) subunit 1 from Oleidesulfovibrio alaskensis (strain ATCC BAA-1058 / DSM 17464 / G20) (Desulfovibrio alaskensis).